Reading from the N-terminus, the 640-residue chain is Spindle assembly abnormal protein 6 homolog (640 aa).

In terms of domain architecture, PISA spans 40 to 92 (VHKKDLAVRLTDDADPFFLYNLVISEEDFQSLKSQQGLLVDFSAFPQKFIDLL). A coiled-coil region spans residues 154–475 (LARCLKCLKE…KQLLKTNENV (322 aa)).

As to quaternary structure, nine homodimers form a cartwheel structure with an internal diameter of 23 nM and radial spokes connecting to the microtubule triplets.

The protein resides in the cytoplasm. Its subcellular location is the cytoskeleton. The protein localises to the microtubule organizing center. It is found in the centrosome. Its function is as follows. Central scaffolding component of the centrioles ensuring their 9-fold symmetry. Required for centrosome biogenesis and duplication: required both for mother-centriole-dependent centriole duplication and deuterosome-dependent centriole amplification in multiciliated cells. In Gallus gallus (Chicken), this protein is Spindle assembly abnormal protein 6 homolog (SASS6).